The following is a 371-amino-acid chain: Succinyl-diaminopimelate desuccinylase (371 aa).

His68 serves as a coordination point for Zn(2+). The active site involves Asp70. Residue Asp99 participates in Zn(2+) binding. The Proton acceptor role is filled by Glu130. The Zn(2+) site is built by Glu131, Glu159, and His344.

The protein belongs to the peptidase M20A family. DapE subfamily. As to quaternary structure, homodimer. Requires Zn(2+) as cofactor. Co(2+) serves as cofactor.

It catalyses the reaction N-succinyl-(2S,6S)-2,6-diaminopimelate + H2O = (2S,6S)-2,6-diaminopimelate + succinate. Its pathway is amino-acid biosynthesis; L-lysine biosynthesis via DAP pathway; LL-2,6-diaminopimelate from (S)-tetrahydrodipicolinate (succinylase route): step 3/3. Catalyzes the hydrolysis of N-succinyl-L,L-diaminopimelic acid (SDAP), forming succinate and LL-2,6-diaminopimelate (DAP), an intermediate involved in the bacterial biosynthesis of lysine and meso-diaminopimelic acid, an essential component of bacterial cell walls. This Acidiphilium cryptum (strain JF-5) protein is Succinyl-diaminopimelate desuccinylase.